The sequence spans 549 residues: Probable protein kinase UbiB (549 aa).

Residues 123 to 501 (DFDDIPLASA…QQKAHKSNYL (379 aa)) enclose the Protein kinase domain. Residues 129–137 (LASASISQV) and Lys152 each bind ATP. The active-site Proton acceptor is the Asp287. Helical transmembrane passes span 498-518 (SNYLLITSAILVICGTILINQ) and 520-540 (ATLWPSYGSIGTGIALWVLGW).

This sequence belongs to the ABC1 family. UbiB subfamily.

Its subcellular location is the cell inner membrane. It functions in the pathway cofactor biosynthesis; ubiquinone biosynthesis [regulation]. In terms of biological role, is probably a protein kinase regulator of UbiI activity which is involved in aerobic coenzyme Q (ubiquinone) biosynthesis. The chain is Probable protein kinase UbiB from Shewanella halifaxensis (strain HAW-EB4).